A 518-amino-acid polypeptide reads, in one-letter code: DNA nucleotidylexotransferase (518 aa).

Residues phenylalanine 11–lysine 17 carry the Nuclear localization signal motif. A BRCT domain is found at isoleucine 27 to glutamine 124. The segment at serine 153–alanine 518 is mediates interaction with DNTTIP2. Residues valine 260 to threonine 264 are involved in DNA binding. Residues glycine 335–lysine 340 and histidine 344–aspartate 347 contribute to the a 2'-deoxyribonucleoside 5'-triphosphate site. Residues aspartate 345, aspartate 347, and aspartate 442 each contribute to the Mg(2+) site. Glycine 457–tryptophan 458 is an a 2'-deoxyribonucleoside 5'-triphosphate binding site.

The protein belongs to the DNA polymerase type-X family. Interacts with PRP19 and DNTTIP1. Interacts with TRERF1. Forms a ternary complex with DNTTIP2 and core histone. Released from this complex by PCNA. Mg(2+) is required as a cofactor.

It localises to the nucleus. It catalyses the reaction DNA(n) + a 2'-deoxyribonucleoside 5'-triphosphate = DNA(n+1) + diphosphate. Functionally, template-independent DNA polymerase which catalyzes the random addition of deoxynucleoside 5'-triphosphate to the 3'-end of a DNA initiator. One of the in vivo functions of this enzyme is the addition of nucleotides at the junction (N region) of rearranged Ig heavy chain and T-cell receptor gene segments during the maturation of B- and T-cells. This is DNA nucleotidylexotransferase (DNTT) from Monodelphis domestica (Gray short-tailed opossum).